The primary structure comprises 274 residues: Formamidopyrimidine-DNA glycosylase (274 aa).

The active-site Schiff-base intermediate with DNA is the proline 2. Glutamate 3 serves as the catalytic Proton donor. The Proton donor; for beta-elimination activity role is filled by lysine 60. Residues histidine 93 and arginine 112 each contribute to the DNA site. Residues 240–274 form an FPG-type zinc finger; sequence DVYGRKGETCRQCGTPITKTVVGGRGTHFCSVCQK. Arginine 264 acts as the Proton donor; for delta-elimination activity in catalysis.

This sequence belongs to the FPG family. In terms of assembly, monomer. Requires Zn(2+) as cofactor.

It catalyses the reaction Hydrolysis of DNA containing ring-opened 7-methylguanine residues, releasing 2,6-diamino-4-hydroxy-5-(N-methyl)formamidopyrimidine.. The catalysed reaction is 2'-deoxyribonucleotide-(2'-deoxyribose 5'-phosphate)-2'-deoxyribonucleotide-DNA = a 3'-end 2'-deoxyribonucleotide-(2,3-dehydro-2,3-deoxyribose 5'-phosphate)-DNA + a 5'-end 5'-phospho-2'-deoxyribonucleoside-DNA + H(+). In terms of biological role, involved in base excision repair of DNA damaged by oxidation or by mutagenic agents. Acts as a DNA glycosylase that recognizes and removes damaged bases. Has a preference for oxidized purines, such as 7,8-dihydro-8-oxoguanine (8-oxoG). Has AP (apurinic/apyrimidinic) lyase activity and introduces nicks in the DNA strand. Cleaves the DNA backbone by beta-delta elimination to generate a single-strand break at the site of the removed base with both 3'- and 5'-phosphates. The sequence is that of Formamidopyrimidine-DNA glycosylase (mutM) from Halalkalibacterium halodurans (strain ATCC BAA-125 / DSM 18197 / FERM 7344 / JCM 9153 / C-125) (Bacillus halodurans).